A 471-amino-acid polypeptide reads, in one-letter code: N-succinylglutamate 5-semialdehyde dehydrogenase (471 aa).

207 to 212 (GSAHAG) contributes to the NAD(+) binding site. Active-site residues include E230 and C264.

The protein belongs to the aldehyde dehydrogenase family. AstD subfamily.

It catalyses the reaction N-succinyl-L-glutamate 5-semialdehyde + NAD(+) + H2O = N-succinyl-L-glutamate + NADH + 2 H(+). Its pathway is amino-acid degradation; L-arginine degradation via AST pathway; L-glutamate and succinate from L-arginine: step 4/5. Functionally, catalyzes the NAD-dependent reduction of succinylglutamate semialdehyde into succinylglutamate. The protein is N-succinylglutamate 5-semialdehyde dehydrogenase of Novosphingobium aromaticivorans (strain ATCC 700278 / DSM 12444 / CCUG 56034 / CIP 105152 / NBRC 16084 / F199).